We begin with the raw amino-acid sequence, 559 residues long: 5-epiaristolochene synthase (559 aa).

Residues D312, D316, D455, T459, and E463 each coordinate Mg(2+). Positions 312–316 (DDTYD) match the DDXXD motif motif.

Belongs to the terpene synthase family. As to quaternary structure, monomer. The cofactor is Mg(2+). In terms of tissue distribution, expressed only in treated leaves an not detected in control leaves.

It localises to the cytoplasm. The catalysed reaction is (2E,6E)-farnesyl diphosphate = (+)-5-epi-aristolochene + diphosphate. It participates in secondary metabolite biosynthesis; terpenoid biosynthesis. Catalyzes the cyclization of trans,trans-farnesyl diphosphate (FPP) to the bicyclic intermediate 5-epi-aristolochene, initial step in the conversion of FPP to the sesquiterpenoid antifungal phytoalexin capsidiol. Produces germacrene A as an enzyme-bound intermediate that is not released by the enzyme, but is further cyclized to produce the bicyclic 5-epi-aristolochene. This is 5-epiaristolochene synthase (EAS) from Capsicum annuum (Capsicum pepper).